Reading from the N-terminus, the 285-residue chain is Acetyl-coenzyme A carboxylase carboxyl transferase subunit beta (285 aa).

One can recognise a CoA carboxyltransferase N-terminal domain in the interval 24 to 285 (GLWYKSPTGK…DLIQNQPVRA (262 aa)).

Belongs to the AccD/PCCB family. In terms of assembly, acetyl-CoA carboxylase is a heterohexamer composed of biotin carboxyl carrier protein (AccB), biotin carboxylase (AccC) and two subunits each of ACCase subunit alpha (AccA) and ACCase subunit beta (AccD).

It is found in the cytoplasm. It catalyses the reaction N(6)-carboxybiotinyl-L-lysyl-[protein] + acetyl-CoA = N(6)-biotinyl-L-lysyl-[protein] + malonyl-CoA. It functions in the pathway lipid metabolism; malonyl-CoA biosynthesis; malonyl-CoA from acetyl-CoA: step 1/1. Its function is as follows. Component of the acetyl coenzyme A carboxylase (ACC) complex. Biotin carboxylase (BC) catalyzes the carboxylation of biotin on its carrier protein (BCCP) and then the CO(2) group is transferred by the transcarboxylase to acetyl-CoA to form malonyl-CoA. This chain is Acetyl-coenzyme A carboxylase carboxyl transferase subunit beta, found in Christiangramia forsetii (strain DSM 17595 / CGMCC 1.15422 / KT0803) (Gramella forsetii).